The primary structure comprises 382 residues: Membrane protein MLC1 (382 aa).

Residues Met-1 to Arg-28 show a composition bias toward basic and acidic residues. The tract at residues Met-1–Leu-43 is disordered. 4 helical membrane passes run Trp-58–Leu-78, Tyr-88–Gly-107, Phe-117–Cys-137, and Ile-148–Ile-168. A phosphoserine mark is found at Ser-183, Ser-185, and Ser-188. The next 4 membrane-spanning stretches (helical) occupy residues Ser-205–Val-225, Leu-234–Val-254, Leu-263–Gly-283, and Leu-309–Ile-329.

Interacts with ATP1B1. Part of a complex containing ATP1B1, TRPV4, AQP4 and HEPACAM.

It localises to the membrane. It is found in the cell membrane. The protein localises to the cytoplasm. The protein resides in the perinuclear region. Its subcellular location is the endoplasmic reticulum. Its function is as follows. Transmembrane protein mainly expressed in brain astrocytes that may play a role in transport across the blood-brain and brain-cerebrospinal fluid barriers. Regulates the response of astrocytes to hypo-osmosis by promoting calcium influx. May function as regulatory protein of membrane protein complexes such as ion channels. The protein is Membrane protein MLC1 of Mus musculus (Mouse).